The primary structure comprises 64 residues: MPKMKSHRGASKRFKRTASGKLKRSHAYTSHLFANKSTKAKRKLRKGAIVSAGDFKRIRNMIAK.

The segment covering 1–26 (MPKMKSHRGASKRFKRTASGKLKRSH) has biased composition (basic residues). The segment at 1-42 (MPKMKSHRGASKRFKRTASGKLKRSHAYTSHLFANKSTKAKR) is disordered.

The protein belongs to the bacterial ribosomal protein bL35 family.

The protein is Large ribosomal subunit protein bL35 of Exiguobacterium sp. (strain ATCC BAA-1283 / AT1b).